The primary structure comprises 981 residues: Calsyntenin-1 (981 aa).

An N-terminal signal peptide occupies residues 1–28 (MLRRPAPALAPAARLLLAGLLCGGGVWA). Topologically, residues 29–859 (ARVNKHKPWL…PHPFAVVPST (831 aa)) are extracellular. 2 Cadherin domains span residues 38–164 (LEPT…APVF) and 165–265 (KEKS…TPGW). Asparagine 346, asparagine 366, and asparagine 515 each carry an N-linked (GlcNAc...) asparagine glycan. A helical membrane pass occupies residues 860–880 (ATVVIVVCVSFLVFMIILGVF). Topologically, residues 881 to 981 (RIRAAHRRTM…LEWDDSTLSY (101 aa)) are cytoplasmic. The disordered stretch occupies residues 915–981 (METYEDQHSS…LEWDDSTLSY (67 aa)). Positions 925–960 (EEEEEEEEEEESEDGEEEDDITSAESESSEEEEGEQ) are enriched in acidic residues. Polar residues predominate over residues 962–981 (DPQNATRQQQLEWDDSTLSY).

It belongs to the calsyntenin family. As to quaternary structure, directly interacts with APBA2. Forms a tripartite complex with APBA2 and APP. Interacts with KLC1. Interacts with APBB1; this interaction stabilizes AlcICD metabolism. In terms of assembly, interacts with PSEN1. In terms of processing, proteolytically processed under normal cellular conditions. A primary zeta-cleavage generates a large extracellular (soluble) N-terminal domain (sAlc) and a short C-terminal transmembrane fragment (CTF1). A secondary cleavage catalyzed by presenilin gamma-secretase within the transmembrane domain releases the beta-Alc-alpha chain in the extracellular milieu and produces an intracellular fragment (AlcICD). This processing is strongly suppressed in the tripartite complex formed with APBA2 and APP, which seems to prevent the association with PSEN1. Expressed in the brain and, a lower level, in the heart, skeletal muscle, kidney and placenta. Accumulates in dystrophic neurites around the amyloid core of Alzheimer disease senile plaques (at protein level).

It is found in the postsynaptic cell membrane. Its subcellular location is the endoplasmic reticulum membrane. The protein localises to the golgi apparatus membrane. The protein resides in the cell projection. It localises to the neuron projection. It is found in the nucleus. Its function is as follows. Postsynaptic adhesion molecule that binds to presynaptic neurexins to mediate both excitatory and inhibitory synapse formation. Promotes synapse development by acting as a cell adhesion molecule at the postsynaptic membrane, which associates with neurexin-alpha at the presynaptic membrane. Also functions as a cargo in axonal anterograde transport by acting as a molecular adapter that promotes KLC1 association with vesicles. Complex formation with APBA2 and APP, stabilizes APP metabolism and enhances APBA2-mediated suppression of beta-APP40 secretion, due to the retardation of intracellular APP maturation. In terms of biological role, as intracellular fragment AlcICD, suppresses APBB1-dependent transactivation stimulated by APP C-terminal intracellular fragment (AICD), most probably by competing with AICD for APBB1-binding. Functionally, in complex with APBA2 and C99, a C-terminal APP fragment, abolishes C99 interaction with PSEN1 and thus APP C99 cleavage by gamma-secretase, most probably through stabilization of the direct interaction between APBA2 and APP. The sequence is that of Calsyntenin-1 from Homo sapiens (Human).